The sequence spans 361 residues: P2Y purinoceptor 4 (361 aa).

The Extracellular portion of the chain corresponds to 1-30 (MTSADSLLFTSLGPSPSSGDGDCKFNEEFK). Residues 31 to 58 (FILLPLSYAVVFVLGLALNAPTLWLFLF) form a helical membrane-spanning segment. The Cytoplasmic segment spans residues 59–68 (RLRPWDATAT). Residues 69 to 91 (YMFHLALSDTLYVLSLPTLVYYY) form a helical membrane-spanning segment. Topologically, residues 92–108 (AARNHWPFGTGFCKFVR) are extracellular. C104 and C181 are oxidised to a cystine. Residues 109–127 (FLFYWNLYCSVLFLTCISV) form a helical membrane-spanning segment. The Cytoplasmic portion of the chain corresponds to 128 to 149 (HRYMGICHPLRAIRWGRPRFAG). The helical transmembrane segment at 150 to 170 (LLCLGVWLVVAGCLVPNLFFV) threads the bilayer. Over 171–192 (TTNANGTTILCHDTTLPEEFDH) the chain is Extracellular. N175 carries N-linked (GlcNAc...) asparagine glycosylation. The helical transmembrane segment at 193 to 218 (YVYFSSTIMVLLFGFPFLITLVCYGL) threads the bilayer. Residues 219 to 242 (MARRLYRPLPGAGQSSSRLRSLRT) are Cytoplasmic-facing. Residues 243-265 (IAVVLTVFAVCFVPFHITRTIYY) form a helical membrane-spanning segment. The Extracellular segment spans residues 266-283 (LARLLNAECRVLNIVNVV). The chain crosses the membrane as a helical span at residues 284–305 (YKVTRPLASANSCLDPVLYLFT). Residues 306-361 (GDKYRNQLQQLCRGSTPKRRTTASSLALVTLHEESISRWADIHQDSIFPAYEGDRL) are Cytoplasmic-facing.

The protein belongs to the G-protein coupled receptor 1 family. Phosphorylation of Ser-329 and Ser-330 is a key step in agonist-dependent desensitization and loss of surface P2RY4. This phosphorylation does not involve PKC, nor other calcium-activated kinases. As to expression, expressed in the liver, intestine, stomach, bladder and lung.

It localises to the cell membrane. Functionally, receptor for ATP and UTP coupled to G-proteins that activate a phosphatidylinositol-calcium second messenger system. The sequence is that of P2Y purinoceptor 4 (P2ry4) from Mus musculus (Mouse).